The primary structure comprises 131 residues: Translation initiation factor 5A (131 aa).

A Hypusine modification is found at Lys37.

Belongs to the eIF-5A family.

Its subcellular location is the cytoplasm. Its function is as follows. Functions by promoting the formation of the first peptide bond. The protein is Translation initiation factor 5A of Methanococcus maripaludis (strain DSM 14266 / JCM 13030 / NBRC 101832 / S2 / LL).